The following is a 317-amino-acid chain: Malate dehydrogenase (317 aa).

NAD(+)-binding positions include 10 to 15 and aspartate 34; that span reads GGGQIG. The substrate site is built by arginine 83 and arginine 89. NAD(+) is bound by residues asparagine 96 and 119-121; that span reads ISN. The substrate site is built by asparagine 121 and arginine 152. Histidine 176 (proton acceptor) is an active-site residue.

The protein belongs to the LDH/MDH superfamily. MDH type 3 family.

The catalysed reaction is (S)-malate + NAD(+) = oxaloacetate + NADH + H(+). Catalyzes the reversible oxidation of malate to oxaloacetate. The protein is Malate dehydrogenase of Geobacter sulfurreducens (strain ATCC 51573 / DSM 12127 / PCA).